The following is a 478-amino-acid chain: uncharacterized protein (478 aa).

This is an uncharacterized protein from Schizosaccharomyces pombe (strain 972 / ATCC 24843) (Fission yeast).